The sequence spans 270 residues: 1-deoxy-11-beta-hydroxypentalenate dehydrogenase (270 aa).

Residue 12-36 (GAASGIGFALSARLAQAGARVVMTD) coordinates NAD(+). Substrate is bound at residue serine 144. Tyrosine 157 (proton acceptor) is an active-site residue. Residue lysine 161 participates in NAD(+) binding.

Belongs to the short-chain dehydrogenases/reductases (SDR) family.

It catalyses the reaction 1-deoxy-11beta-hydroxypentalenate + NAD(+) = 1-deoxy-11-oxopentalenate + NADH + H(+). It functions in the pathway antibiotic biosynthesis; neopentalenolactone biosynthesis. Functionally, catalyzes the oxidation of 1-deoxy-11-beta-hydroxypentalenic acid to 1-deoxy-11-oxopentalenic acid in the biosynthesis of neopentalenolactone antibiotic. This Streptomyces avermitilis (strain ATCC 31267 / DSM 46492 / JCM 5070 / NBRC 14893 / NCIMB 12804 / NRRL 8165 / MA-4680) protein is 1-deoxy-11-beta-hydroxypentalenate dehydrogenase (ptlF).